The primary structure comprises 159 residues: Cytochrome c-type biogenesis protein CcmE (159 aa).

Over 1–8 (MNLRRKNR) the chain is Cytoplasmic. Residues 9–29 (LWVVCAVLAGLALTTALVLYA) traverse the membrane as a helical; Signal-anchor for type II membrane protein segment. At 30–159 (LRANIDLFYT…PQRADKDTSS (130 aa)) the chain is on the periplasmic side. The segment at 129-159 (KHDENYTPPEVEKAMQENHRRPQRADKDTSS) is disordered. The heme site is built by histidine 130 and tyrosine 134.

Belongs to the CcmE/CycJ family.

The protein resides in the cell inner membrane. In terms of biological role, heme chaperone required for the biogenesis of c-type cytochromes. Transiently binds heme delivered by CcmC and transfers the heme to apo-cytochromes in a process facilitated by CcmF and CcmH. The chain is Cytochrome c-type biogenesis protein CcmE from Salmonella paratyphi A (strain ATCC 9150 / SARB42).